Here is a 398-residue protein sequence, read N- to C-terminus: MKQYNYPIVKTLLDTDAYKFYMQQAVFYHYKNVDVVAEFICRGPNILGCYSHILLDQINMMSSLSLSHEEYLYMTTFPFFKKEYLHWLKKFRYNITQVKVDNYHGQLHIRISGLWKEVILWEVPILSLISEIFHRHCYPEITSNIAVQHLNKKLKEFFKKNRDVDLSRLKIVDFGTRRRFSYDVQYSIIKRLKDTFPFLIGSSNYHISRILKLLPVGTQAHEWFQAHQQISSNLRNSQTLALKTWLSQYNQHLSIALTDCITMDSFLRDFNLFFSKSYQGIRHDSGDPVKWGEKAIEHYERLGIDPTTKTLLFSDNLNFRKMISLYKKFNNRVNIIFGIGTKLTCDIPNVKPLNIVIKLVKCNGKPVAKLSDSPGKTFCLDRNFIKSLCKAFDLSLTV.

Residue H221 is modified to Phosphohistidine; by autocatalysis.

This sequence belongs to the NAPRTase family. In terms of processing, transiently phosphorylated on a His residue during the reaction cycle. Phosphorylation strongly increases the affinity for substrates and increases the rate of nicotinate D-ribonucleotide production. Dephosphorylation regenerates the low-affinity form of the enzyme, leading to product release.

The enzyme catalyses nicotinate + 5-phospho-alpha-D-ribose 1-diphosphate + ATP + H2O = nicotinate beta-D-ribonucleotide + ADP + phosphate + diphosphate. It participates in cofactor biosynthesis; NAD(+) biosynthesis; nicotinate D-ribonucleotide from nicotinate: step 1/1. Catalyzes the synthesis of beta-nicotinate D-ribonucleotide from nicotinate and 5-phospho-D-ribose 1-phosphate at the expense of ATP. The polypeptide is Nicotinate phosphoribosyltransferase (Buchnera aphidicola subsp. Schizaphis graminum (strain Sg)).